The primary structure comprises 273 residues: Shikimate dehydrogenase (NADP(+)) (273 aa).

Shikimate-binding positions include 18 to 20 (SKS) and Thr65. The Proton acceptor role is filled by Lys69. Position 81 (Glu81) interacts with NADP(+). Positions 90 and 105 each coordinate shikimate. NADP(+) is bound by residues 130–134 (GAGGA), 154–159 (NRTHSK), and Met217. Tyr219 is a shikimate binding site. Position 240 (Gly240) interacts with NADP(+).

The protein belongs to the shikimate dehydrogenase family. Homodimer.

It carries out the reaction shikimate + NADP(+) = 3-dehydroshikimate + NADPH + H(+). Its pathway is metabolic intermediate biosynthesis; chorismate biosynthesis; chorismate from D-erythrose 4-phosphate and phosphoenolpyruvate: step 4/7. Involved in the biosynthesis of the chorismate, which leads to the biosynthesis of aromatic amino acids. Catalyzes the reversible NADPH linked reduction of 3-dehydroshikimate (DHSA) to yield shikimate (SA). This is Shikimate dehydrogenase (NADP(+)) from Janthinobacterium sp. (strain Marseille) (Minibacterium massiliensis).